A 159-amino-acid polypeptide reads, in one-letter code: Ribosome maturation factor RimP (159 aa).

Belongs to the RimP family.

The protein resides in the cytoplasm. Functionally, required for maturation of 30S ribosomal subunits. This Lacticaseibacillus casei (strain BL23) (Lactobacillus casei) protein is Ribosome maturation factor RimP.